The sequence spans 429 residues: Glutamate-1-semialdehyde 2,1-aminomutase 2 (429 aa).

Residue Lys268 is modified to N6-(pyridoxal phosphate)lysine.

Belongs to the class-III pyridoxal-phosphate-dependent aminotransferase family. HemL subfamily. In terms of assembly, homodimer. It depends on pyridoxal 5'-phosphate as a cofactor.

It localises to the cytoplasm. The catalysed reaction is (S)-4-amino-5-oxopentanoate = 5-aminolevulinate. Its pathway is porphyrin-containing compound metabolism; protoporphyrin-IX biosynthesis; 5-aminolevulinate from L-glutamyl-tRNA(Glu): step 2/2. This is Glutamate-1-semialdehyde 2,1-aminomutase 2 from Staphylococcus aureus (strain Mu50 / ATCC 700699).